The following is a 124-amino-acid chain: Urease subunit beta (124 aa).

Belongs to the urease beta subunit family. As to quaternary structure, heterotrimer of UreA (gamma), UreB (beta) and UreC (alpha) subunits. Three heterotrimers associate to form the active enzyme.

It localises to the cytoplasm. The enzyme catalyses urea + 2 H2O + H(+) = hydrogencarbonate + 2 NH4(+). It participates in nitrogen metabolism; urea degradation; CO(2) and NH(3) from urea (urease route): step 1/1. The protein is Urease subunit beta of Bacillus velezensis (strain DSM 23117 / BGSC 10A6 / LMG 26770 / FZB42) (Bacillus amyloliquefaciens subsp. plantarum).